The primary structure comprises 252 residues: Uridylate kinase (252 aa).

Position 27 to 30 (27 to 30 (KLGG)) interacts with ATP. Gly68 is a binding site for UMP. ATP-binding residues include Gly69 and Arg73. UMP contacts are provided by residues Asp88 and 149 to 156 (MGLPYFST). ATP is bound by residues Tyr182 and Asp185.

This sequence belongs to the UMP kinase family. Homohexamer.

It localises to the cytoplasm. It carries out the reaction UMP + ATP = UDP + ADP. It functions in the pathway pyrimidine metabolism; CTP biosynthesis via de novo pathway; UDP from UMP (UMPK route): step 1/1. Inhibited by UTP. Its function is as follows. Catalyzes the reversible phosphorylation of UMP to UDP. This is Uridylate kinase from Mycobacterium sp. (strain JLS).